Reading from the N-terminus, the 236-residue chain is MKQMDANEIISFIQNSTKSTPVKVYIKGDLEGIEFGEQAKTFITGNTGVVFGEWSDIQEALETNKDKIEDVVVENDRRNSAIPMLDLKNIKARIEPGAIIRDQVEIGDNAVIMMGASINIGSVIGEGTMIDMNVVLGGRATVGKNCHIGAGSVLAGVIEPPSAKPVVVEDDVVIGANAVVLEGVTIGKGAVVAAGAIVVNDVEPYTVVAGTPAKKIKDIDEKTKGKTEIKQELRQL.

It belongs to the transferase hexapeptide repeat family. DapH subfamily.

It catalyses the reaction (S)-2,3,4,5-tetrahydrodipicolinate + acetyl-CoA + H2O = L-2-acetamido-6-oxoheptanedioate + CoA. Its pathway is amino-acid biosynthesis; L-lysine biosynthesis via DAP pathway; LL-2,6-diaminopimelate from (S)-tetrahydrodipicolinate (acetylase route): step 1/3. Catalyzes the transfer of an acetyl group from acetyl-CoA to tetrahydrodipicolinate. The sequence is that of 2,3,4,5-tetrahydropyridine-2,6-dicarboxylate N-acetyltransferase from Bacillus pumilus (strain SAFR-032).